A 291-amino-acid polypeptide reads, in one-letter code: Probable endonuclease 4 (291 aa).

His72, His112, Glu147, Asp181, His184, His215, Asp228, His230, and Glu260 together coordinate Zn(2+).

Belongs to the AP endonuclease 2 family. Zn(2+) is required as a cofactor.

The catalysed reaction is Endonucleolytic cleavage to 5'-phosphooligonucleotide end-products.. Functionally, endonuclease IV plays a role in DNA repair. It cleaves phosphodiester bonds at apurinic or apyrimidinic (AP) sites, generating a 3'-hydroxyl group and a 5'-terminal sugar phosphate. The chain is Probable endonuclease 4 from Mycoplasma genitalium (strain ATCC 33530 / DSM 19775 / NCTC 10195 / G37) (Mycoplasmoides genitalium).